The sequence spans 522 residues: Glycerol kinase (522 aa).

Thr15 provides a ligand contact to substrate. Residue Arg19 coordinates ATP. Substrate is bound by residues 89 to 90 (RE), Tyr143, and 255 to 256 (DQ). ATP is bound by residues Thr276, Gly321, and 430–434 (GATAN).

It belongs to the FGGY kinase family. Highly expressed in germinating seeds and senescent leaves, and at lower levels in roots, leaves, flowers and siliques.

It is found in the cytoplasm. It localises to the cytosol. The enzyme catalyses glycerol + ATP = sn-glycerol 3-phosphate + ADP + H(+). It functions in the pathway polyol metabolism; glycerol degradation via glycerol kinase pathway; sn-glycerol 3-phosphate from glycerol: step 1/1. Functionally, key enzyme in the regulation of glycerol uptake and metabolism. Required for resistance to nonhost Pseudomonas bacteria and to the pathogenic fungus B.cinerea. In Arabidopsis thaliana (Mouse-ear cress), this protein is Glycerol kinase (GLPK).